The following is a 318-amino-acid chain: Ankyrin repeat and SOCS box protein 7 (318 aa).

ANK repeat units follow at residues 13–42 (QEELQIQAAVAAGDVHTVRKMLEQGYSPNG), 46–75 (NGWTLLHFSAARGKERCVRVFLEHGADPTV), 80–109 (GGFTALHYAAMHGRARIARLMLESEYRSDI), 116–145 (DGWTPLHVAAHYGRDSFVRLLLEFKAEVDP), 149–178 (KGTTPLQLAIIRERSSCVKILLDHNANIDI), 180–208 (NGFLLRYAVIKSNHSYCRMFLQRGADTNL), and 213–242 (DGQTPLHLSALRDDVLCARMLYNYGADTNT). The 54-residue stretch at 265–318 (LDFLQEVTRQPRNLQDLCRIKIRQCIGLQNLKLLDELPIAKVMKDYLKHKFDDI) folds into the SOCS box domain.

This sequence belongs to the ankyrin SOCS box (ASB) family. As to quaternary structure, interacts with CUL5. Interacts with RNF7. Interacts with PSRC1.

It participates in protein modification; protein ubiquitination. Its function is as follows. Probable substrate-recognition component of a SCF-like ECS (Elongin-Cullin-SOCS-box protein) E3 ubiquitin-protein ligase complex which mediates the ubiquitination and subsequent proteasomal degradation of target proteins. Plays a role in spindle dynamics and genome integrity by targeting the mitotic progression protein PSRC1 for proteasomal degradation in a cell cycle-dependent manner. Also participates in meiosis by mediating the proper attachment between kinetochores and microtubules. This is Ankyrin repeat and SOCS box protein 7 (ASB7) from Homo sapiens (Human).